Reading from the N-terminus, the 456-residue chain is Protein translocase subunit SecY (456 aa).

The Cytoplasmic segment spans residues 1–21 (MEQLKEKFEPLFSVLPQVKSP). The helical transmembrane segment at 22 to 48 (GYRVPFREKLKWTGIILVLYFFLAQIP) threads the bilayer. At 49–59 (LYGLSANAVDQ) the chain is on the extracellular side. An intramembrane region (helical) is located at residues 60-67 (FAQFRAVL). A discontinuously helical membrane pass occupies residues 60 to 88 (FAQFRAVLAGNFGSILTLGIGPIVSASII). Residues 68 to 79 (AGNFGSILTLGI) lie within the membrane without spanning it. The helical intramembrane region spans 80 to 88 (GPIVSASII). Residues 89–109 (LQLLVGGKILKLDLSRHEDKA) are Cytoplasmic-facing. The helical transmembrane segment at 110–134 (FFQGLQKLLAIVFTFFEALIFVLTG) threads the bilayer. At 135-141 (SLAPSAP) the chain is on the extracellular side. The chain crosses the membrane as a helical span at residues 142-166 (QFVWVLILQLTIGGILIIFLDEVVS). Residues 167–172 (KWGFGS) are Cytoplasmic-facing. A helical transmembrane segment spans residues 173–191 (GVGLFIAAGVSQEIIVGAF). Residues 192–224 (NPLSAPTQPGVPAGRITGFLYLLFTGQSPDFQY) lie on the Extracellular side of the membrane. The helical transmembrane segment at 225–246 (YVLPVLALIAVFLVVVYAESMR) threads the bilayer. Residues 247–275 (VEIPISMGGGKRLSRGAVGKYPLRFIYAS) lie on the Cytoplasmic side of the membrane. Residues 276–297 (NMPVILTSALLLNVQLLANVFQ) form a helical membrane-spanning segment. Residues 298–334 (KLGYPILGTVSNGQAVDGLAYLLTAPRSIDALILDPF) are Extracellular-facing. A helical transmembrane segment spans residues 335-354 (RVVFYAVVFIGLCVLFAWLW). Residues 355–397 (VEISNIGPRHVARQLYQMGMQIPGFRSSRGQFEKILKRYIPTI) are Cytoplasmic-facing. A helical transmembrane segment spans residues 398–416 (TILGGAFVGLLAFVADLTG). Topologically, residues 417–419 (SLG) are extracellular. A helical transmembrane segment spans residues 420 to 434 (GGTGVLLTVGIVYRL). Residues 435–456 (YEEIAQEQLMDMHPILRSFLGD) lie on the Cytoplasmic side of the membrane.

Belongs to the SecY/SEC61-alpha family. In terms of assembly, component of the Sec protein translocase complex. Heterotrimer consisting of alpha (SecY), beta (SecG) and gamma (SecE) subunits. The heterotrimers can form oligomers, although 1 heterotrimer is thought to be able to translocate proteins. Interacts with the ribosome. May interact with SecDF, and other proteins may be involved.

It is found in the cell membrane. In terms of biological role, the central subunit of the protein translocation channel SecYEG. Consists of two halves formed by TMs 1-5 and 6-10. These two domains form a lateral gate at the front which open onto the bilayer between TMs 2 and 7, and are clamped together by SecE at the back. The channel is closed by both a pore ring composed of hydrophobic SecY resides and a short helix (helix 2A) on the extracellular side of the membrane which forms a plug. The plug probably moves laterally to allow the channel to open. The ring and the pore may move independently. The polypeptide is Protein translocase subunit SecY (Methanothermobacter thermautotrophicus (strain ATCC 29096 / DSM 1053 / JCM 10044 / NBRC 100330 / Delta H) (Methanobacterium thermoautotrophicum)).